The sequence spans 347 residues: uncharacterized protein (347 aa).

This is an uncharacterized protein from Invertebrate iridescent virus 3 (IIV-3).